Here is an 81-residue protein sequence, read N- to C-terminus: Photosystem I iron-sulfur center (81 aa).

4Fe-4S ferredoxin-type domains lie at 2–31 (SHSV…MVPW) and 39–68 (IASA…VRVY). 8 residues coordinate [4Fe-4S] cluster: cysteine 11, cysteine 14, cysteine 17, cysteine 21, cysteine 48, cysteine 51, cysteine 54, and cysteine 58.

The eukaryotic PSI reaction center is composed of at least 11 subunits. The cofactor is [4Fe-4S] cluster.

It localises to the plastid. It is found in the chloroplast thylakoid membrane. The enzyme catalyses reduced [plastocyanin] + hnu + oxidized [2Fe-2S]-[ferredoxin] = oxidized [plastocyanin] + reduced [2Fe-2S]-[ferredoxin]. In terms of biological role, apoprotein for the two 4Fe-4S centers FA and FB of photosystem I (PSI); essential for photochemical activity. FB is the terminal electron acceptor of PSI, donating electrons to ferredoxin. The C-terminus interacts with PsaA/B/D and helps assemble the protein into the PSI complex. Required for binding of PsaD and PsaE to PSI. PSI is a plastocyanin/cytochrome c6-ferredoxin oxidoreductase, converting photonic excitation into a charge separation, which transfers an electron from the donor P700 chlorophyll pair to the spectroscopically characterized acceptors A0, A1, FX, FA and FB in turn. In Pleurastrum terricola (Filamentous green alga), this protein is Photosystem I iron-sulfur center.